A 525-amino-acid chain; its full sequence is Glucose-6-phosphate isomerase (525 aa).

Glu356 (proton donor) is an active-site residue. Active-site residues include His387 and Lys502.

It belongs to the GPI family.

Its subcellular location is the cytoplasm. It carries out the reaction alpha-D-glucose 6-phosphate = beta-D-fructose 6-phosphate. It functions in the pathway carbohydrate biosynthesis; gluconeogenesis. It participates in carbohydrate degradation; glycolysis; D-glyceraldehyde 3-phosphate and glycerone phosphate from D-glucose: step 2/4. Its function is as follows. Catalyzes the reversible isomerization of glucose-6-phosphate to fructose-6-phosphate. The polypeptide is Glucose-6-phosphate isomerase (Treponema denticola (strain ATCC 35405 / DSM 14222 / CIP 103919 / JCM 8153 / KCTC 15104)).